We begin with the raw amino-acid sequence, 189 residues long: MSETTETKFTPRFKTKYQETVAPALQEQFGYANVMEMPRVVKVVVNMGLGEAAKDSKLVDNAIKDLTAITGQKPVINRAKKSIAQFKLREGMPIGAHVTMRGDRMWEFLDRLVTLALPRIRDFRGLSDRHFDGNGNYTFGLTEQSMFHEIDQDKIDRVRGMDITVVTSAKTDDEGRALLKALGFPFKTN.

It belongs to the universal ribosomal protein uL5 family. As to quaternary structure, part of the 50S ribosomal subunit; part of the 5S rRNA/L5/L18/L25 subcomplex. Contacts the 5S rRNA and the P site tRNA. Forms a bridge to the 30S subunit in the 70S ribosome.

Functionally, this is one of the proteins that bind and probably mediate the attachment of the 5S RNA into the large ribosomal subunit, where it forms part of the central protuberance. In the 70S ribosome it contacts protein S13 of the 30S subunit (bridge B1b), connecting the 2 subunits; this bridge is implicated in subunit movement. Contacts the P site tRNA; the 5S rRNA and some of its associated proteins might help stabilize positioning of ribosome-bound tRNAs. In Kocuria rhizophila (strain ATCC 9341 / DSM 348 / NBRC 103217 / DC2201), this protein is Large ribosomal subunit protein uL5.